Reading from the N-terminus, the 306-residue chain is tRNA dimethylallyltransferase (306 aa).

12–19 (GPTAAGKT) is a binding site for ATP. 14–19 (TAAGKT) lines the substrate pocket. 3 interaction with substrate tRNA regions span residues 37–40 (DSAL), 161–165 (QRINR), and 242–247 (RCVGYR).

Belongs to the IPP transferase family. As to quaternary structure, monomer. Mg(2+) serves as cofactor.

It carries out the reaction adenosine(37) in tRNA + dimethylallyl diphosphate = N(6)-dimethylallyladenosine(37) in tRNA + diphosphate. Catalyzes the transfer of a dimethylallyl group onto the adenine at position 37 in tRNAs that read codons beginning with uridine, leading to the formation of N6-(dimethylallyl)adenosine (i(6)A). This Pseudoalteromonas translucida (strain TAC 125) protein is tRNA dimethylallyltransferase.